Consider the following 557-residue polypeptide: Tripeptidyl-peptidase 1 (557 aa).

The N-terminal stretch at 1–16 (MRVAVFVLSFIWLVNG) is a signal peptide. Residues 17-190 (ELLEADQDAV…WEGARQAILG (174 aa)) constitute a propeptide, removed in mature form. N53 carries N-linked (GlcNAc...) asparagine glycosylation. Cysteines 107 and 118 form a disulfide. Positions 194 to 557 (GVTPAVIRNR…YPVFLASLMD (364 aa)) constitute a Peptidase S53 domain. N-linked (GlcNAc...) asparagine glycosylation is found at N205 and N216. Active-site charge relay system residues include E266 and D270. Residues N280, N307, and N438 are each glycosylated (N-linked (GlcNAc...) asparagine). Intrachain disulfides connect C359/C521 and C517/C532. S470 acts as the Charge relay system in catalysis. Ca(2+)-binding residues include D512 and V513. D538 is a binding site for Ca(2+).

Ca(2+) serves as cofactor. In terms of processing, activated by autocatalytic proteolytical processing.

It localises to the lysosome. It catalyses the reaction Release of an N-terminal tripeptide from a polypeptide, but also has endopeptidase activity.. In terms of biological role, lysosomal serine protease with tripeptidyl-peptidase I activity. May act as a non-specific lysosomal peptidase which generates tripeptides from the breakdown products produced by lysosomal proteinases. Requires substrates with an unsubstituted N-terminus. The protein is Tripeptidyl-peptidase 1 of Danio rerio (Zebrafish).